Reading from the N-terminus, the 202-residue chain is Orotate phosphoribosyltransferase (202 aa).

5-phospho-alpha-D-ribose 1-diphosphate contacts are provided by residues arginine 94, lysine 98, histidine 100, and 120–128 (EDLISTGGS). Residue serine 124 participates in orotate binding.

This sequence belongs to the purine/pyrimidine phosphoribosyltransferase family. PyrE subfamily. In terms of assembly, homodimer. The cofactor is Mg(2+).

It catalyses the reaction orotidine 5'-phosphate + diphosphate = orotate + 5-phospho-alpha-D-ribose 1-diphosphate. The protein operates within pyrimidine metabolism; UMP biosynthesis via de novo pathway; UMP from orotate: step 1/2. Functionally, catalyzes the transfer of a ribosyl phosphate group from 5-phosphoribose 1-diphosphate to orotate, leading to the formation of orotidine monophosphate (OMP). In Oceanobacillus iheyensis (strain DSM 14371 / CIP 107618 / JCM 11309 / KCTC 3954 / HTE831), this protein is Orotate phosphoribosyltransferase.